The sequence spans 179 residues: ATP synthase subunit delta (179 aa).

Belongs to the ATPase delta chain family. As to quaternary structure, F-type ATPases have 2 components, F(1) - the catalytic core - and F(0) - the membrane proton channel. F(1) has five subunits: alpha(3), beta(3), gamma(1), delta(1), epsilon(1). F(0) has three main subunits: a(1), b(2) and c(10-14). The alpha and beta chains form an alternating ring which encloses part of the gamma chain. F(1) is attached to F(0) by a central stalk formed by the gamma and epsilon chains, while a peripheral stalk is formed by the delta and b chains.

It localises to the cell inner membrane. In terms of biological role, f(1)F(0) ATP synthase produces ATP from ADP in the presence of a proton or sodium gradient. F-type ATPases consist of two structural domains, F(1) containing the extramembraneous catalytic core and F(0) containing the membrane proton channel, linked together by a central stalk and a peripheral stalk. During catalysis, ATP synthesis in the catalytic domain of F(1) is coupled via a rotary mechanism of the central stalk subunits to proton translocation. Its function is as follows. This protein is part of the stalk that links CF(0) to CF(1). It either transmits conformational changes from CF(0) to CF(1) or is implicated in proton conduction. The sequence is that of ATP synthase subunit delta from Burkholderia pseudomallei (strain 1710b).